The chain runs to 271 residues: Dermonecrotic toxin LhSicTox-alphaIA2aiv (271 aa).

His3 is a catalytic residue. Residues Glu23 and Asp25 each coordinate Mg(2+). His39 functions as the Nucleophile in the catalytic mechanism. 2 cysteine pairs are disulfide-bonded: Cys43–Cys49 and Cys45–Cys188. A Mg(2+)-binding site is contributed by Asp83.

This sequence belongs to the arthropod phospholipase D family. Class II subfamily. It depends on Mg(2+) as a cofactor. Expressed by the venom gland.

It localises to the secreted. The catalysed reaction is an N-(acyl)-sphingosylphosphocholine = an N-(acyl)-sphingosyl-1,3-cyclic phosphate + choline. It catalyses the reaction an N-(acyl)-sphingosylphosphoethanolamine = an N-(acyl)-sphingosyl-1,3-cyclic phosphate + ethanolamine. It carries out the reaction a 1-acyl-sn-glycero-3-phosphocholine = a 1-acyl-sn-glycero-2,3-cyclic phosphate + choline. The enzyme catalyses a 1-acyl-sn-glycero-3-phosphoethanolamine = a 1-acyl-sn-glycero-2,3-cyclic phosphate + ethanolamine. Functionally, dermonecrotic toxins cleave the phosphodiester linkage between the phosphate and headgroup of certain phospholipids (sphingolipid and lysolipid substrates), forming an alcohol (often choline) and a cyclic phosphate. This toxin acts on sphingomyelin (SM). It may also act on ceramide phosphoethanolamine (CPE), lysophosphatidylcholine (LPC) and lysophosphatidylethanolamine (LPE), but not on lysophosphatidylserine (LPS), and lysophosphatidylglycerol (LPG). It acts by transphosphatidylation, releasing exclusively cyclic phosphate products as second products. Induces dermonecrosis, hemolysis, increased vascular permeability, edema, inflammatory response, and platelet aggregation. The sequence is that of Dermonecrotic toxin LhSicTox-alphaIA2aiv from Loxosceles hirsuta (Recluse spider).